Here is a 522-residue protein sequence, read N- to C-terminus: Glutathione reductase, mitochondrial (522 aa).

The transit peptide at 1 to 43 (MALLPRALSSGGRPSWRRAARASRGFPLPLPFPAAATHALSRA) directs the protein to the mitochondrion. FAD-binding residues include Ser74 and Gly75. Ser74 contributes to the glutathione binding site. A glutathione-binding site is contributed by Arg81. Residue Glu94 participates in FAD binding. An N6-acetyllysine modification is found at Lys97. Residues Thr101, Cys102, and Lys110 each coordinate FAD. Residues Cys102 and Cys107 are joined by a disulfide bond. A glutathione-binding site is contributed by Tyr158. Residue Ala174 participates in FAD binding. Ala239, Ile242, Glu245, Arg262, Arg268, and Gly334 together coordinate NADP(+). FAD is bound at residue Asp375. Leu381 contacts NADP(+). Thr383 is a binding site for FAD. Arg391 is a glutathione binding site. Val414 is an NADP(+) binding site. His511 lines the FAD pocket. The Proton acceptor role is filled by His511.

The protein belongs to the class-I pyridine nucleotide-disulfide oxidoreductase family. Homodimer; disulfide-linked. The cofactor is FAD.

The protein localises to the mitochondrion. The protein resides in the cytoplasm. It catalyses the reaction 2 glutathione + NADP(+) = glutathione disulfide + NADPH + H(+). Its function is as follows. Catalyzes the reduction of glutathione disulfide (GSSG) to reduced glutathione (GSH). Constitutes the major mechanism to maintain a high GSH:GSSG ratio in the cytosol. This is Glutathione reductase, mitochondrial (GSR) from Callithrix jacchus (White-tufted-ear marmoset).